A 166-amino-acid chain; its full sequence is Photosystem I assembly protein Ycf3 (166 aa).

TPR repeat units follow at residues 35 to 68 (AFTY…EIDA), 72 to 105 (SYML…NPRL), and 120 to 153 (GEQA…SPTS).

This sequence belongs to the Ycf3 family.

Its subcellular location is the plastid. It localises to the chloroplast thylakoid membrane. Its function is as follows. Essential for the assembly of the photosystem I (PSI) complex. May act as a chaperone-like factor to guide the assembly of the PSI subunits. In Bigelowiella natans (Pedinomonas minutissima), this protein is Photosystem I assembly protein Ycf3.